Consider the following 133-residue polypeptide: Ribosome-binding factor A (133 aa).

The protein belongs to the RbfA family. In terms of assembly, monomer. Binds 30S ribosomal subunits, but not 50S ribosomal subunits or 70S ribosomes.

The protein localises to the cytoplasm. In terms of biological role, one of several proteins that assist in the late maturation steps of the functional core of the 30S ribosomal subunit. Associates with free 30S ribosomal subunits (but not with 30S subunits that are part of 70S ribosomes or polysomes). Required for efficient processing of 16S rRNA. May interact with the 5'-terminal helix region of 16S rRNA. The protein is Ribosome-binding factor A of Pseudomonas fluorescens (strain Pf0-1).